We begin with the raw amino-acid sequence, 498 residues long: Probable cytosol aminopeptidase (498 aa).

Mn(2+)-binding residues include K264 and D269. The active site involves K276. Mn(2+) is bound by residues D287, D346, and E348. The active site involves R350.

This sequence belongs to the peptidase M17 family. Mn(2+) is required as a cofactor.

It localises to the cytoplasm. It carries out the reaction Release of an N-terminal amino acid, Xaa-|-Yaa-, in which Xaa is preferably Leu, but may be other amino acids including Pro although not Arg or Lys, and Yaa may be Pro. Amino acid amides and methyl esters are also readily hydrolyzed, but rates on arylamides are exceedingly low.. It catalyses the reaction Release of an N-terminal amino acid, preferentially leucine, but not glutamic or aspartic acids.. In terms of biological role, presumably involved in the processing and regular turnover of intracellular proteins. Catalyzes the removal of unsubstituted N-terminal amino acids from various peptides. The protein is Probable cytosol aminopeptidase of Xanthobacter autotrophicus (strain ATCC BAA-1158 / Py2).